Here is a 432-residue protein sequence, read N- to C-terminus: Adenylosuccinate synthetase (432 aa).

GTP is bound by residues 12–18 and 40–42; these read GDEGKGK and GHT. Asp-13 acts as the Proton acceptor in catalysis. Residues Asp-13 and Gly-40 each contribute to the Mg(2+) site. IMP-binding positions include 13–16, 38–41, Thr-130, Arg-144, Gln-225, Thr-240, and Arg-304; these read DEGK and NAGH. Residue His-41 is the Proton donor of the active site. 300–306 is a substrate binding site; sequence STTGRPR. Residues Arg-306, 332–334, and 414–416 each bind GTP; these read KLD and SVG.

This sequence belongs to the adenylosuccinate synthetase family. Homodimer. Mg(2+) serves as cofactor.

The protein localises to the cytoplasm. The catalysed reaction is IMP + L-aspartate + GTP = N(6)-(1,2-dicarboxyethyl)-AMP + GDP + phosphate + 2 H(+). It participates in purine metabolism; AMP biosynthesis via de novo pathway; AMP from IMP: step 1/2. In terms of biological role, plays an important role in the de novo pathway of purine nucleotide biosynthesis. Catalyzes the first committed step in the biosynthesis of AMP from IMP. The sequence is that of Adenylosuccinate synthetase from Geobacter sp. (strain M21).